Here is a 733-residue protein sequence, read N- to C-terminus: Centrosomal protein of 68 kDa (733 aa).

Residues 71 to 80 (SKEPVADRSK) show a composition bias toward basic and acidic residues. 3 disordered regions span residues 71 to 92 (SKEP…SASV), 150 to 207 (GLSQ…SFAN), and 222 to 244 (VVGA…DATG). Residues 178 to 190 (SSRSISASSVGSS) show a composition bias toward low complexity. The span at 231 to 241 (GSAQPLTSGSD) shows a compositional bias: polar residues. S315 bears the Phosphoserine mark. Residues 420-442 (PQLKTKEKEPPFPRQKRGRQHVS) are disordered. Residues S453 and S459 each carry the phosphoserine modification. The disordered stretch occupies residues 497 to 571 (HSSLQVSDSD…KPLKTQPASK (75 aa)). Residues 540–569 (IQPQDSRGKSSLMSNQTLGVSSKPLKTQPA) show a composition bias toward polar residues.

Interacts with CNTLN; the interaction recruits CEP68 to the centrosome. Interacts with the SCF(FBXW11) complex which contains SKP1, CUL1 and FBXW11; the interaction is probably mediated by FBXW11 and the complex also contains CDK5RAP2 and PCNT. Also interacts with F-box protein BTRC. Interacts with serine/threonine-protein kinase PLK1; the interaction leads to phosphorylation of CEP68 and its subsequent degradation. Interacts with NEK2; the interaction leads to phosphorylation of CEP68. Post-translationally, phosphorylation by PLK1 is required for binding to BTRC in prometaphase. Phosphorylated directly or indirectly by NEK2. NEK2-mediated phosphorylation promotes CEP68 dissociation from the centrosome and its degradation at the onset of mitosis. In terms of processing, ubiquitinated and targeted for proteasomal degradation in early mitosis by the SCF(BTRC) and/or SCF(FBXW11) E3 ubiquitin-protein ligase complexes. Degradation is complete by prometaphase and is required for removal of CDK5RAP2 from the peripheral pericentriolar material and subsequent centriole separation.

It localises to the cytoplasm. The protein localises to the cytoskeleton. Its subcellular location is the microtubule organizing center. The protein resides in the centrosome. In terms of biological role, involved in maintenance of centrosome cohesion, probably as part of a linker structure which prevents centrosome splitting. Required for localization of CDK5RAP2 to the centrosome during interphase. Contributes to CROCC/rootletin filament formation. This chain is Centrosomal protein of 68 kDa (Cep68), found in Mus musculus (Mouse).